A 263-amino-acid polypeptide reads, in one-letter code: Indole-3-glycerol phosphate synthase (263 aa).

It belongs to the TrpC family.

It catalyses the reaction 1-(2-carboxyphenylamino)-1-deoxy-D-ribulose 5-phosphate + H(+) = (1S,2R)-1-C-(indol-3-yl)glycerol 3-phosphate + CO2 + H2O. It participates in amino-acid biosynthesis; L-tryptophan biosynthesis; L-tryptophan from chorismate: step 4/5. This is Indole-3-glycerol phosphate synthase from Rhodospirillum rubrum (strain ATCC 11170 / ATH 1.1.1 / DSM 467 / LMG 4362 / NCIMB 8255 / S1).